The following is a 2336-amino-acid chain: Voltage-dependent N-type calcium channel subunit alpha-1B (2336 aa).

A disordered region spans residues methionine 1 to leucine 37. Residues methionine 1–arginine 90 lie on the Cytoplasmic side of the membrane. Over residues glycine 10–leucine 37 the composition is skewed to gly residues. Omega-N-methylarginine is present on arginine 22. One copy of the I repeat lies at asparagine 82 to phenylalanine 359. A helical transmembrane segment spans residues isoleucine 91–leucine 114. The Extracellular segment spans residues glutamate 115 to aspartate 131. The helical transmembrane segment at aspartate 132–leucine 152 threads the bilayer. Residues glycine 153–arginine 163 lie on the Cytoplasmic side of the membrane. The chain crosses the membrane as a helical span at residues asparagine 164–alanine 182. Residues glycine 183 to aspartate 187 are Extracellular-facing. Residues leucine 188–valine 211 form a helical membrane-spanning segment. At valine 212–valine 221 the chain is on the cytoplasmic side. Residues proline 222 to phenylalanine 244 traverse the membrane as a helical segment. The Extracellular segment spans residues tyrosine 245–tryptophan 331. A glycan (N-linked (GlcNAc...) asparagine) is linked at asparagine 256. A helical membrane pass occupies residues asparagine 332–serine 356. The Cytoplasmic portion of the chain corresponds to glycine 357–glutamine 483. The binding to the beta subunit stretch occupies residues glutamine 379 to glutamate 396. Serine 411 carries the post-translational modification Phosphoserine. Position 452–459 (alanine 452–threonine 459) interacts with ATP. An II repeat occupies glutamate 469 to leucine 713. A helical transmembrane segment spans residues serine 484–methionine 502. The Extracellular portion of the chain corresponds to valine 503–threonine 512. Residues threonine 513–tyrosine 535 traverse the membrane as a helical segment. The Cytoplasmic portion of the chain corresponds to glycine 536–serine 545. Serine 545 contributes to the a 1,2-diacyl-sn-glycero-3-phospho-(1D-myo-inositol-4,5-bisphosphate) binding site. The helical transmembrane segment at serine 546–isoleucine 567 threads the bilayer. Topologically, residues lysine 568–glycine 574 are extracellular. Residues isoleucine 575–phenylalanine 587 form a helical membrane-spanning segment. The a 1,2-diacyl-sn-glycero-3-phospho-(1D-myo-inositol-4,5-bisphosphate) site is built by arginine 585 and lysine 588. Over lysine 588–asparagine 605 the chain is Cytoplasmic. The helical transmembrane segment at serine 606–leucine 631 threads the bilayer. Over phenylalanine 632–glycine 683 the chain is Extracellular. Residues methionine 684–valine 710 traverse the membrane as a helical segment. Over aspartate 711–tyrosine 1149 the chain is Cytoplasmic. 3 positions are modified to phosphoserine: serine 746, serine 749, and serine 784. 2 disordered regions span residues tyrosine 800–lysine 1021 and glutamate 1051–valine 1076. Composition is skewed to basic and acidic residues over residues valine 806–leucine 827, glutamate 870–alanine 891, glycine 920–proline 930, histidine 938–glutamate 948, glycine 970–threonine 981, and proline 996–lysine 1021. The span at glutamine 1059–valine 1076 shows a compositional bias: polar residues. Residue serine 1067 is modified to Phosphoserine. An III repeat occupies asparagine 1135–phenylalanine 1421. A helical transmembrane segment spans residues phenylalanine 1150–glutamate 1168. The Extracellular portion of the chain corresponds to aspartate 1169–phenylalanine 1176. A helical transmembrane segment spans residues arginine 1177–isoleucine 1201. Residues aspartate 1202–aspartate 1215 lie on the Cytoplasmic side of the membrane. A helical transmembrane segment spans residues leucine 1216–glycine 1240. Topologically, residues serine 1241–isoleucine 1246 are extracellular. A helical transmembrane segment spans residues asparagine 1247 to leucine 1267. At proline 1268–leucine 1285 the chain is on the cytoplasmic side. A helical transmembrane segment spans residues asparagine 1286 to leucine 1305. Residues phenylalanine 1306 to methionine 1392 are Extracellular-facing. A helical membrane pass occupies residues glutamate 1393–isoleucine 1418. At isoleucine 1419–proline 1473 the chain is on the cytoplasmic side. Residues asparagine 1458–phenylalanine 1711 form an IV repeat. A helical membrane pass occupies residues proline 1474–methionine 1492. The Extracellular portion of the chain corresponds to lysine 1493 to glutamate 1500. Residues tyrosine 1501–isoleucine 1525 form a helical membrane-spanning segment. Topologically, residues alanine 1526–aspartate 1535 are cytoplasmic. Residues alanine 1536–isoleucine 1557 traverse the membrane as a helical segment. Over alanine 1558–asparagine 1563 the chain is Extracellular. The N-linked (GlcNAc...) asparagine glycan is linked to asparagine 1563. A helical membrane pass occupies residues leucine 1564 to glycine 1582. Residues tyrosine 1583 to tyrosine 1601 are Cytoplasmic-facing. The helical transmembrane segment at valine 1602–phenylalanine 1621 threads the bilayer. The Extracellular segment spans residues glycine 1622–phenylalanine 1683. Asparagine 1675 carries an N-linked (GlcNAc...) asparagine glycan. A helical membrane pass occupies residues alanine 1684–isoleucine 1707. Residues methionine 1708 to cysteine 2336 lie on the Cytoplasmic side of the membrane. One can recognise an EF-hand domain in the interval histidine 1724–proline 1759. Residues aspartate 1737, arginine 1743, and aspartate 1748 each contribute to the Ca(2+) site. Residues threonine 1981–threonine 2202 are disordered. The segment covering serine 2048 to lysine 2062 has biased composition (basic residues). Serine 2065 bears the Phosphoserine mark. Basic and acidic residues predominate over residues cysteine 2097–glutamine 2113. The span at glycine 2161–serine 2177 shows a compositional bias: polar residues. Serine 2221, serine 2230, and serine 2253 each carry phosphoserine.

This sequence belongs to the calcium channel alpha-1 subunit (TC 1.A.1.11) family. CACNA1B subfamily. As to quaternary structure, multisubunit complex consisting of alpha-1, alpha-2, beta and delta subunits in a 1:1:1:1 ratio. The channel activity is directed by the pore-forming and voltage-sensitive alpha-1 subunit. In many cases, this subunit is sufficient to generate voltage-sensitive calcium channel activity. The auxiliary subunits beta and alpha-2/delta linked by a disulfide bridge regulate the channel activity. Interacts with RIMS1. Interacts with FMR1 (via C-terminus); this interaction induces a decrease in the number of presynaptic functional CACNA1B channels at the cell surface. Phosphorylated in vitro by CaM-kinase II, PKA, PKC and CGPK. As to expression, central nervous system.

It is found in the membrane. The catalysed reaction is Ca(2+)(in) = Ca(2+)(out). Is specifically blocked by omega-conotoxin GVIA. Is specifically blocked by omega-conotoxin MVIIA (ziconotide). Is insensitive to dihydropyridines (DHP). Its function is as follows. Voltage-sensitive calcium channels (VSCC) mediate the entry of calcium ions into excitable cells and are also involved in a variety of calcium-dependent processes, including muscle contraction, hormone or neurotransmitter release, gene expression, cell motility, cell division and cell death. This alpha-1B subunit gives rise to N-type calcium currents. N-type calcium channels belong to the 'high-voltage activated' (HVA) group. They are involved in pain signaling. Calcium channels containing alpha-1B subunit may play a role in directed migration of immature neurons. Mediates Ca(2+) release probability at hippocampal neuronal soma and synaptic terminals. The polypeptide is Voltage-dependent N-type calcium channel subunit alpha-1B (Cacna1b) (Rattus norvegicus (Rat)).